The chain runs to 692 residues: Potassium-transporting ATPase ATP-binding subunit (692 aa).

The next 4 helical transmembrane spans lie at 35–55 (VMFI…KDLY), 64–84 (LQIS…EAIA), 213–233 (IALT…VMSL), and 254–274 (ILIS…LSAI). The 4-aspartylphosphate intermediate role is filled by Asp307. ATP contacts are provided by residues Asp344, Glu348, 377–384 (FSASTKMS), and Lys400. Residues Asp523 and Asp527 each contribute to the Mg(2+) site. 3 helical membrane passes run 592-612 (YFAI…VGPL), 626-646 (AVLS…PLAL), and 672-692 (MVIP…LGII).

The protein belongs to the cation transport ATPase (P-type) (TC 3.A.3) family. Type IA subfamily. As to quaternary structure, the system is composed of three essential subunits: KdpA, KdpB and KdpC.

The protein localises to the cell inner membrane. The enzyme catalyses K(+)(out) + ATP + H2O = K(+)(in) + ADP + phosphate + H(+). Part of the high-affinity ATP-driven potassium transport (or Kdp) system, which catalyzes the hydrolysis of ATP coupled with the electrogenic transport of potassium into the cytoplasm. This subunit is responsible for energy coupling to the transport system and for the release of the potassium ions to the cytoplasm. The sequence is that of Potassium-transporting ATPase ATP-binding subunit from Leptospira interrogans serogroup Icterohaemorrhagiae serovar Lai (strain 56601).